The following is a 423-amino-acid chain: MLRVRCLRGGSRGAEALHYIGSRLGRTVTGWVQRTFQSTQAATASSGNSCAADDKATDPLPKDCPVSSYNEWDPLEEVIVGRAENACVPPFTVEVKANTYEKYWPFYQKYGGHYFPKDHLKKAVAEIEEMCNILKMEGVTVRRPDPIDWSVKYKTPDFESTGLYGAMPRDILIVVGNEIIEAPMAWRARFFEYRAYRSIIKDYFRRGAKWTTAPKPTMADELYDQDYPIYSVEDRHKLAAQGKFVTTEFEPCFDAADFIRAGRDIFAQRSQVTNYMGIEWMRKHLAPDYRVHIISFKDPNPMHIDATFNIIGPGLVLSNPDRPCHQIDLFKKAGWTIVTPPIPVIPDDHPLWMSSKWLSMNVLMLDEKRVMVDANEVPIQKMFEKLGISTIKISIRNANSLGGGFHCWTCDVRRRGTLQSYFD.

A mitochondrion-targeting transit peptide spans 1–43; the sequence is MLRVRCLRGGSRGAEALHYIGSRLGRTVTGWVQRTFQSTQAAT. Serine 46 and serine 49 each carry phosphoserine. Aspartate 170 is a binding site for arginine. Catalysis depends on residues aspartate 254 and histidine 303. Positions 305, 322, 354, and 355 each coordinate arginine. Lysine 385 is modified (N6-acetyllysine). Residue cysteine 407 is the Amidino-cysteine intermediate of the active site.

This sequence belongs to the amidinotransferase family. Homodimer. As to expression, kidney. Expressed biallelically in placenta.

The protein localises to the mitochondrion inner membrane. It catalyses the reaction L-arginine + glycine = guanidinoacetate + L-ornithine. The catalysed reaction is 4-aminobutanoate + L-arginine = 4-guanidinobutanoate + L-ornithine. It carries out the reaction beta-alanine + L-arginine = 3-guanidinopropanoate + L-ornithine. The enzyme catalyses taurine + L-arginine = taurocyamine + L-ornithine. It functions in the pathway amine and polyamine biosynthesis; creatine biosynthesis; creatine from L-arginine and glycine: step 1/2. Its function is as follows. Transamidinase that catalyzes the transfer of the amidino group of L-arginine onto the amino moiety of acceptor metabolites such as glycine, beta-alanine, gamma-aminobutyric acid (GABA) and taurine yielding the corresponding guanidine derivatives. Catalyzes the rate-limiting step of creatine biosynthesis, namely the transfer of the amidino group from L-arginine to glycine to generate guanidinoacetate, which is then methylated by GAMT to form creatine. Provides creatine as a source for ATP generation in tissues with high energy demands, in particular skeletal muscle, heart and brain. The polypeptide is Glycine amidinotransferase, mitochondrial (GATM) (Sus scrofa (Pig)).